The following is a 443-amino-acid chain: MLSQTNQNIFTVSRLNAEVRLLLENEMGIVWLVGEISNFSAPVSGHWYLTLKDSRAQVKCAMFRGNNRRVTFKPANGNQVLVKARLSLYEPRGDYQLIIESMQPEGDGRLQQEFEALKMKLAAEGLFAQTNKQPLPEHPKRVGVITSKTGAALYDILDVLKRRDPSLPVVVYPTMVQGEEAAIQMAQAIGRANSRDECDVLIVGRGGGSLEDLWCFNNEILARTIAASQIPIISAVGHEVDVTIADFVADIRAPTPSAAAELVSRDNSHKDQALVTHQHKLASAMRYYLAQQKQQSAQLMHRLERQHPSYQLQRQTQQLDELEMRLQRAMQRFITTRQQAVERKHHRLQLNSPVKRLAEQKSKLDRVEQKLLDAMDRKLLTMRHQLAIAAEKLDTVSPLATLKRGYSITQTEQGQVVTQAKDVKTGDVLVTRLSDGELRSTVN.

It belongs to the XseA family. As to quaternary structure, heterooligomer composed of large and small subunits.

It is found in the cytoplasm. The catalysed reaction is Exonucleolytic cleavage in either 5'- to 3'- or 3'- to 5'-direction to yield nucleoside 5'-phosphates.. In terms of biological role, bidirectionally degrades single-stranded DNA into large acid-insoluble oligonucleotides, which are then degraded further into small acid-soluble oligonucleotides. This chain is Exodeoxyribonuclease 7 large subunit, found in Vibrio campbellii (strain ATCC BAA-1116).